The chain runs to 492 residues: Glutamyl-tRNA(Gln) amidotransferase subunit A (492 aa).

Residues Lys78 and Ser158 each act as charge relay system in the active site. The active-site Acyl-ester intermediate is the Ser182.

Belongs to the amidase family. GatA subfamily. Heterotrimer of A, B and C subunits.

It catalyses the reaction L-glutamyl-tRNA(Gln) + L-glutamine + ATP + H2O = L-glutaminyl-tRNA(Gln) + L-glutamate + ADP + phosphate + H(+). In terms of biological role, allows the formation of correctly charged Gln-tRNA(Gln) through the transamidation of misacylated Glu-tRNA(Gln) in organisms which lack glutaminyl-tRNA synthetase. The reaction takes place in the presence of glutamine and ATP through an activated gamma-phospho-Glu-tRNA(Gln). This is Glutamyl-tRNA(Gln) amidotransferase subunit A from Parvibaculum lavamentivorans (strain DS-1 / DSM 13023 / NCIMB 13966).